A 305-amino-acid chain; its full sequence is Tyrosine recombinase XerD (305 aa).

The region spanning Pro3 to Leu88 is the Core-binding (CB) domain. The region spanning Ser109–Ala299 is the Tyr recombinase domain. Catalysis depends on residues Arg149, Lys173, His251, Arg254, and His277. The active-site O-(3'-phospho-DNA)-tyrosine intermediate is Tyr286.

This sequence belongs to the 'phage' integrase family. XerD subfamily. As to quaternary structure, forms a cyclic heterotetrameric complex composed of two molecules of XerC and two molecules of XerD.

Its subcellular location is the cytoplasm. In terms of biological role, site-specific tyrosine recombinase, which acts by catalyzing the cutting and rejoining of the recombining DNA molecules. The XerC-XerD complex is essential to convert dimers of the bacterial chromosome into monomers to permit their segregation at cell division. It also contributes to the segregational stability of plasmids. The sequence is that of Tyrosine recombinase XerD from Xanthomonas axonopodis pv. citri (strain 306).